The following is a 156-amino-acid chain: Small ribosomal subunit protein uS7 (156 aa).

The protein belongs to the universal ribosomal protein uS7 family. Part of the 30S ribosomal subunit. Contacts proteins S9 and S11.

Functionally, one of the primary rRNA binding proteins, it binds directly to 16S rRNA where it nucleates assembly of the head domain of the 30S subunit. Is located at the subunit interface close to the decoding center, probably blocks exit of the E-site tRNA. The protein is Small ribosomal subunit protein uS7 of Solibacter usitatus (strain Ellin6076).